The sequence spans 455 residues: O-acyltransferase pigD (455 aa).

It belongs to the trichothecene 3-O-acetyltransferase family.

It functions in the pathway secondary metabolite biosynthesis. Functionally, O-acetyltransferase; part of the gene cluster that mediates the biosynthesis of azaphilone pigments (MonAzPs), a complex mixture of compounds with a common azaphilone skeleton very widely used as food colorants. Within the pathway, pigD directly transfers the fatty acyl chain from the beta-ketoacyl-ACP produced by the pigJ-pigK fatty acid synthase (FAS) to the C-4 alcohol. The first step of the pathway is performed by the nrPKS pigA that forms the hexaketide precursor from successive condensations of five malonyl-CoA units, with a simple acetyl-CoA starter unit. The role of esterase pigG is not clear, but it may play at most a supplementary role in the formation of the benzaldehyde produced by the pigA nrPKS. This very reactive benzaldehyde is intercepted by the pigC ketoreductase that to provide the first stable enzyme-free MonAzPs intermediate, 6-(4-hydroxy-2-oxopentyl)-3-methyl-2,4-dioxocyclohexane carbaldehyde, also known as M7PKS-1. The FAD-dependent monooxygenase pigN hydroxylates M7PKS-1 at C-4, which triggers the formation of the pyran ring. PigJ, pigK and pigD are involved in the acetylation of the pyran ring. PigJ and pigK form the two subunits of a dedicated fungal FAS that produces the side chain fatty acyl moiety of MonAzPs and pigD transfers the fatty acyl chain to the C-4 alcohol. PigM and pigO are involved in the elimination of the omega-1 alcohol. PigM acts as an O-acetyltransferase that synthesizes the putative O-11 acetyl intermediate whereas pigO eliminates acetic acid to yield an intermediate with a C10(11) double bond. The dehydration of the C-11 alcohol followed by the reduction of the C6(7) double bond by the NAD(P)H-dependent oxidoreductase pigE increases the electrophilicity of the C-5 ketone of the resulting acyl benzopyran. This in turn sets up the C-5 ketone for an intramolecular Knoevenagel aldol condensation with the C-20 enol of the side chain. This condensation affords the characteristic linear tricyclic carbon skeletons of the yellow pigments that serve as the common precursors for the classical yellow pigments monascin and ankaflavin, orange pigments rubopunctatin and monascorubrin, and red pigments ribropunctamine and monascorubramine. The FAD-dependent oxidoreductase pigF is especially invoved in the biosynthesis of orange and red pigments via desaturation of C6(7). This chain is O-acyltransferase pigD, found in Monascus ruber (Mold).